We begin with the raw amino-acid sequence, 270 residues long: Bis(5'-nucleosyl)-tetraphosphatase, symmetrical (270 aa).

It belongs to the Ap4A hydrolase family.

It carries out the reaction P(1),P(4)-bis(5'-adenosyl) tetraphosphate + H2O = 2 ADP + 2 H(+). Hydrolyzes diadenosine 5',5'''-P1,P4-tetraphosphate to yield ADP. The chain is Bis(5'-nucleosyl)-tetraphosphatase, symmetrical from Haemophilus ducreyi (strain 35000HP / ATCC 700724).